The chain runs to 142 residues: 3-hydroxyacyl-[acyl-carrier-protein] dehydratase FabZ (142 aa).

Residue His-47 is part of the active site.

The protein belongs to the thioester dehydratase family. FabZ subfamily.

The protein localises to the cytoplasm. The enzyme catalyses a (3R)-hydroxyacyl-[ACP] = a (2E)-enoyl-[ACP] + H2O. Its function is as follows. Involved in unsaturated fatty acids biosynthesis. Catalyzes the dehydration of short chain beta-hydroxyacyl-ACPs and long chain saturated and unsaturated beta-hydroxyacyl-ACPs. This chain is 3-hydroxyacyl-[acyl-carrier-protein] dehydratase FabZ, found in Thermoanaerobacter sp. (strain X514).